The chain runs to 1165 residues: Chitin synthase 3 (1165 aa).

Residues 1–170 (MTGLNGDDPD…ETNDTLSFWQ (170 aa)) lie on the Cytoplasmic side of the membrane. 2 disordered regions span residues 19-53 (DEESLLRSRHSVGSGAPHRQGSLVRPERSRLNNPD) and 74-97 (PSSTGVNPNATRRSGSLRSKGSVR). Residues 74–92 (PSSTGVNPNATRRSGSLRS) show a composition bias toward polar residues. A Glycyl lysine isopeptide (Lys-Gly) (interchain with G-Cter in ubiquitin) cross-link involves residue K136. A helical transmembrane segment spans residues 171–191 (MYCYFITFWAPAPILAFCGMP). The Extracellular segment spans residues 192 to 340 (KKERQMAWRE…PNFTVENYAG (149 aa)). N-linked (GlcNAc...) asparagine glycans are attached at residues N303 and N332. Residues 341 to 354 (WNCHTSKEDRDAFY) form a helical membrane-spanning segment. At 355–452 (GLKSKADVYF…SKTVGCIASD (98 aa)) the chain is on the cytoplasmic side. A helical membrane pass occupies residues 453–473 (VVLYVSLVFILSVVIIKFIIA). The Extracellular portion of the chain corresponds to 474-891 (CYFRWTVARK…EYYISHHQAK (418 aa)). S537 carries the phosphoserine modification. T538 carries the phosphothreonine modification. Residues 892–910 (AFESVFGSVTCLPGCFSMY) traverse the membrane as a helical segment. Residues 911-1029 (RIKSPKGSDG…SMQFVIGIEL (119 aa)) are Cytoplasmic-facing. The chain crosses the membrane as a helical span at residues 1030 to 1050 (IGTMVLPLAICFTIYVIIFAI). The Extracellular segment spans residues 1051–1055 (VSKPT). The helical transmembrane segment at 1056 to 1076 (PVITLVLLAIILGLPGLIVVI) threads the bilayer. Over 1077–1165 (TATRWSYLWW…RKEESDSFVA (89 aa)) the chain is Cytoplasmic.

This sequence belongs to the chitin synthase family. Class IV subfamily. Homodimer. May form higher order oligomers. Seems to interact with BNI4 and SKT5 which link CHS3 to septins. Glycosylated. In terms of processing, palmitoylated by PFA4; required for proper export from the ER.

It is found in the cell membrane. The protein resides in the bud neck. Its subcellular location is the cytoplasmic vesicle membrane. It catalyses the reaction [(1-&gt;4)-N-acetyl-beta-D-glucosaminyl](n) + UDP-N-acetyl-alpha-D-glucosamine = [(1-&gt;4)-N-acetyl-beta-D-glucosaminyl](n+1) + UDP + H(+). Functionally, polymerizes chitin, a structural polymer of the cell wall and septum, by transferring the sugar moiety of UDP-GlcNAc to the non-reducing end of the growing chitin polymer. Appears to be responsible for synthesis of the majority of the chitin found in the cell wall periphery. It is involved in the synthesis of the chitin ring that forms in the cell wall just before bud emergence. This ring remains at the base of the bud as the bud grows and ultimately forms part of the bud scar marking the division site on the mother cell. Also catalyzes the synthesis of chitin laid down during mating and spore cell-wall synthesis. The polypeptide is Chitin synthase 3 (Saccharomyces cerevisiae (strain ATCC 204508 / S288c) (Baker's yeast)).